A 148-amino-acid polypeptide reads, in one-letter code: Putative nickel-responsive regulator (148 aa).

Residues His76, His87, His89, and Cys95 each contribute to the Ni(2+) site.

This sequence belongs to the transcriptional regulatory CopG/NikR family. Ni(2+) serves as cofactor.

Its function is as follows. Transcriptional regulator. This is Putative nickel-responsive regulator from Rhodopseudomonas palustris (strain ATCC BAA-98 / CGA009).